Reading from the N-terminus, the 67-residue chain is Phycobilisome 7.8 kDa linker polypeptide, allophycocyanin-associated, core (67 aa).

In terms of domain architecture, CpcD-like spans 1 to 56 (MRVFKVTACVPSQTRIRTQRELQNTYFTKLVPYDNWFREQQRIMKMGGKIVKVELA).

The protein belongs to the phycobilisome linker protein family.

The protein resides in the cellular thylakoid membrane. Functionally, rod linker protein, associated with allophycocyanin. Linker polypeptides determine the state of aggregation and the location of the disk-shaped phycobiliprotein units within the phycobilisome and modulate their spectroscopic properties in order to mediate a directed and optimal energy transfer. The chain is Phycobilisome 7.8 kDa linker polypeptide, allophycocyanin-associated, core (apcC) from Arthrospira platensis (Spirulina platensis).